Consider the following 275-residue polypeptide: Mitochondrial fission factor homolog A (275 aa).

The Cytoplasmic segment spans residues 1 to 255 (MAEVNRIHYE…ENKERAKREM (255 aa)). The segment at 100-171 (DFLEPEPAAN…PLISPEDSQN (72 aa)) is disordered. The span at 114-130 (PREEMKSHFRSRREQCR) shows a compositional bias: basic and acidic residues. The segment covering 131 to 142 (SENSTMRRNGQI) has biased composition (polar residues). Positions 223 to 253 (LTDAASLRRQIIKLNRRLQLLEHENKERAKR) form a coiled coil. A helical; Anchor for type IV membrane protein membrane pass occupies residues 256 to 273 (VMYSLTVAFWLVNSWIWL). The Extracellular portion of the chain corresponds to 274–275 (RR).

This sequence belongs to the Tango11 family.

The protein localises to the mitochondrion outer membrane. It localises to the peroxisome. Its function is as follows. Plays a role in mitochondrial and peroxisomal fission. Promotes the recruitment and association of the fission mediator dynamin-related protein 1 (DNM1L) to the mitochondrial surface. The polypeptide is Mitochondrial fission factor homolog A (Danio rerio (Zebrafish)).